We begin with the raw amino-acid sequence, 544 residues long: ATP synthase subunit alpha (544 aa).

Residue 173–180 (GDRQTGKT) participates in ATP binding. A disordered region spans residues 513–544 (GSDGQIIGGGEPESDGEDVDVEQEQIVRQKRG). Residues 524–535 (PESDGEDVDVEQ) show a composition bias toward acidic residues.

This sequence belongs to the ATPase alpha/beta chains family. In terms of assembly, F-type ATPases have 2 components, CF(1) - the catalytic core - and CF(0) - the membrane proton channel. CF(1) has five subunits: alpha(3), beta(3), gamma(1), delta(1), epsilon(1). CF(0) has three main subunits: a(1), b(2) and c(9-12). The alpha and beta chains form an alternating ring which encloses part of the gamma chain. CF(1) is attached to CF(0) by a central stalk formed by the gamma and epsilon chains, while a peripheral stalk is formed by the delta and b chains.

Its subcellular location is the cell membrane. The enzyme catalyses ATP + H2O + 4 H(+)(in) = ADP + phosphate + 5 H(+)(out). Produces ATP from ADP in the presence of a proton gradient across the membrane. The alpha chain is a regulatory subunit. This chain is ATP synthase subunit alpha, found in Beutenbergia cavernae (strain ATCC BAA-8 / DSM 12333 / CCUG 43141 / JCM 11478 / NBRC 16432 / NCIMB 13614 / HKI 0122).